A 345-amino-acid chain; its full sequence is Uroporphyrinogen decarboxylase (345 aa).

Residues 27-31, phenylalanine 46, aspartate 76, tyrosine 152, serine 207, and histidine 321 each bind substrate; that span reads RQAGR.

The protein belongs to the uroporphyrinogen decarboxylase family. In terms of assembly, homodimer.

Its subcellular location is the cytoplasm. The enzyme catalyses uroporphyrinogen III + 4 H(+) = coproporphyrinogen III + 4 CO2. The protein operates within porphyrin-containing compound metabolism; protoporphyrin-IX biosynthesis; coproporphyrinogen-III from 5-aminolevulinate: step 4/4. Catalyzes the decarboxylation of four acetate groups of uroporphyrinogen-III to yield coproporphyrinogen-III. This Staphylococcus aureus (strain Mu3 / ATCC 700698) protein is Uroporphyrinogen decarboxylase.